The chain runs to 670 residues: Leucine-rich repeat-containing protein 45 (670 aa).

LRR repeat units follow at residues 87 to 108 (TVKSLDLKGNNLRTTGAEALGK), 115 to 136 (SIRSLILEWNSLGVWEEGFSFF), 145 to 166 (FLQRLDLRNNQINHHGAGELAM), 173 to 194 (SLQELDLRWNNIGLLGGRALLN), and 201 to 223 (TLKKLELAGNNVPSDILKAVEQA). Residues 234–645 (LSETQNRTSV…ISRMKEEEAQ (412 aa)) are a coiled coil.

Homomer.

The protein resides in the cytoplasm. The protein localises to the cytoskeleton. It is found in the microtubule organizing center. Its subcellular location is the centrosome. Functionally, component of the proteinaceous fiber-like linker between two centrioles, required for centrosome cohesion. This chain is Leucine-rich repeat-containing protein 45 (LRRC45), found in Gallus gallus (Chicken).